The following is a 90-amino-acid chain: Cell division topological specificity factor (90 aa).

Belongs to the MinE family.

Its function is as follows. Prevents the cell division inhibition by proteins MinC and MinD at internal division sites while permitting inhibition at polar sites. This ensures cell division at the proper site by restricting the formation of a division septum at the midpoint of the long axis of the cell. This chain is Cell division topological specificity factor, found in Francisella tularensis subsp. tularensis (strain FSC 198).